Here is a 253-residue protein sequence, read N- to C-terminus: 5'/3'-nucleotidase SurE (253 aa).

A divalent metal cation is bound by residues D8, D9, S39, and N92.

The protein belongs to the SurE nucleotidase family. The cofactor is a divalent metal cation.

The protein resides in the cytoplasm. The enzyme catalyses a ribonucleoside 5'-phosphate + H2O = a ribonucleoside + phosphate. The catalysed reaction is a ribonucleoside 3'-phosphate + H2O = a ribonucleoside + phosphate. It catalyses the reaction [phosphate](n) + H2O = [phosphate](n-1) + phosphate + H(+). In terms of biological role, nucleotidase with a broad substrate specificity as it can dephosphorylate various ribo- and deoxyribonucleoside 5'-monophosphates and ribonucleoside 3'-monophosphates with highest affinity to 3'-AMP. Also hydrolyzes polyphosphate (exopolyphosphatase activity) with the preference for short-chain-length substrates (P20-25). Might be involved in the regulation of dNTP and NTP pools, and in the turnover of 3'-mononucleotides produced by numerous intracellular RNases (T1, T2, and F) during the degradation of various RNAs. The sequence is that of 5'/3'-nucleotidase SurE from Escherichia fergusonii (strain ATCC 35469 / DSM 13698 / CCUG 18766 / IAM 14443 / JCM 21226 / LMG 7866 / NBRC 102419 / NCTC 12128 / CDC 0568-73).